The sequence spans 1156 residues: Nitric oxide synthase, inducible (1156 aa).

Residues 23–27 (DINNN) carry the DINNN-motif; mediates interaction with SPSB1, SPSB2 and SPSB4 motif. The disordered stretch occupies residues 27 to 84 (NVGKFYQPPSSPVTQDDPKRHSPGKHGNESPQPLTGTVKTSPESLSKLDAPPSACPRH). A compositionally biased stretch (polar residues) spans 55–70 (ESPQPLTGTVKTSPES). 2 residues coordinate Zn(2+): Cys110 and Cys115. Ser118 is a (6R)-L-erythro-5,6,7,8-tetrahydrobiopterin binding site. Cys200 is a heme b binding site. 4 residues coordinate L-arginine: Gln263, Trp372, Tyr373, and Glu377. Arg381, Ile462, Trp463, and Phe476 together coordinate (6R)-L-erythro-5,6,7,8-tetrahydrobiopterin. Tyr491 is a binding site for heme b. The tract at residues 515-535 (FKVLVKAVFFASVLMHKAMAS) is calmodulin-binding. Residues 539–677 (ATILFATETG…AFRSWAVQTF (139 aa)) form the Flavodoxin-like domain. FMN is bound by residues Thr545, Glu546, Thr547, Arg549, and Ser550. Phosphotyrosine is present on Tyr575. FMN-binding residues include Ser591, Thr592, Ser628, Cys635, Glu661, and Gln665. The 241-residue stretch at 730 to 970 (KHVFTMRLKS…VRSASGFQLP (241 aa)) folds into the FAD-binding FR-type domain. Residue Arg750 participates in NADP(+) binding. Residues His772, Arg906, Tyr908, Ser909, Thr924, and Ala926 each coordinate FAD. Thr929 lines the NADP(+) pocket. Residues Tyr930, Val943, Cys944, and Ser945 each contribute to the FAD site. Residues Thr984, Arg1017, Ser1046, Arg1047, Lys1053, Tyr1055, Gln1057, and Asp1090 each contribute to the NADP(+) site.

It belongs to the NOS family. As to quaternary structure, homodimer. Interacts with NHERF1. Interacts with GAPDH; induced by oxidatively-modified low-densitity lipoprotein (LDL(ox)). Interacts with S100A8 and S100A9 to form the iNOS-S100A8/9 transnitrosylase complex. Interacts with SPSB1, SPSB2 and SPSB4. Interacts with ELOC and CUL5 in the presence of SPSB1 or SPSB2 or SPSB4. Forms a complex with ASL, ASS1 and HSP90AA1; the complex regulates cell-autonomous L-arginine synthesis and citrulline recycling while channeling extracellular L-arginine to nitric oxide synthesis pathway. Heme b is required as a cofactor. Requires FAD as cofactor. FMN serves as cofactor. It depends on (6R)-L-erythro-5,6,7,8-tetrahydrobiopterin as a cofactor. Post-translationally, polyubiquitinated; mediated by SPSB1, SPSB2 and SPSB4, leading to proteasomal degradation.

It is found in the cytoplasm. Its subcellular location is the cytosol. The catalysed reaction is 2 L-arginine + 3 NADPH + 4 O2 + H(+) = 2 L-citrulline + 2 nitric oxide + 3 NADP(+) + 4 H2O. Its activity is regulated as follows. Regulated by calcium/calmodulin. Its function is as follows. Produces nitric oxide (NO) which is a messenger molecule with diverse functions throughout the body. In macrophages, NO mediates tumoricidal and bactericidal actions. Also has nitrosylase activity and mediates cysteine S-nitrosylation of cytoplasmic target proteins such PTGS2/COX2. As component of the iNOS-S100A8/9 transnitrosylase complex involved in the selective inflammatory stimulus-dependent S-nitrosylation of GAPDH implicated in regulation of the GAIT complex activity and probably multiple targets including ANXA5, EZR, MSN and VIM. Involved in inflammation, enhances the synthesis of pro-inflammatory mediators such as IL6 and IL8. This chain is Nitric oxide synthase, inducible (NOS2), found in Bos taurus (Bovine).